A 532-amino-acid polypeptide reads, in one-letter code: 2,3-bisphosphoglycerate-independent phosphoglycerate mutase (532 aa).

Residues Asp-15 and Ser-65 each coordinate Mn(2+). Ser-65 functions as the Phosphoserine intermediate in the catalytic mechanism. Residues His-126, 156-157 (RD), Arg-188, Arg-194, 258-261 (RPDR), and Lys-331 each bind substrate. Residues Asp-398, His-402, Asp-439, His-440, and His-457 each coordinate Mn(2+).

Belongs to the BPG-independent phosphoglycerate mutase family. Monomer. Requires Mn(2+) as cofactor.

It carries out the reaction (2R)-2-phosphoglycerate = (2R)-3-phosphoglycerate. Its pathway is carbohydrate degradation; glycolysis; pyruvate from D-glyceraldehyde 3-phosphate: step 3/5. Its function is as follows. Catalyzes the interconversion of 2-phosphoglycerate and 3-phosphoglycerate. This chain is 2,3-bisphosphoglycerate-independent phosphoglycerate mutase, found in Nostoc punctiforme (strain ATCC 29133 / PCC 73102).